Here is a 1379-residue protein sequence, read N- to C-terminus: Partitioning defective protein 3 (1379 aa).

Low complexity predominate over residues 1 to 23; that stretch reads MSASSTSSSSTSCPEGGEPSGSC. 2 disordered regions span residues 1–32 and 208–335; these read MSAS…GEST and YNVG…SDRK. 2 stretches are compositionally biased toward polar residues: residues 239 to 256 and 272 to 284; these read SFDQ…PKPS and ILRS…ASGS. 2 stretches are compositionally biased toward basic and acidic residues: residues 302–315 and 322–335; these read EVEK…ERKS and DKNP…SDRK. 2 PDZ domains span residues 381-483 and 515-599; these read LVTF…IINR and VVEL…SRVS. The stretch at 606–626 forms a coiled coil; it reads TSASSENKENEETLKVVEEEK. Residues 659–750 enclose the PDZ 3 domain; sequence VIPFINGSSS…EVGMISSNVR (92 aa). 5 disordered regions span residues 767-873, 887-918, 949-1085, 1273-1301, and 1350-1379; these read DLSR…MGAA, HQRQ…RSPM, QSME…GGNV, VEPV…SGSS, and AYET…FPQY. Composition is skewed to low complexity over residues 776–786 and 798–826; these read SSPSPSSRMSS and ATRG…AVPA. Composition is skewed to basic and acidic residues over residues 828-844 and 854-869; these read LTER…RNDE and FNRE…EKRG. Over residues 894–912 the composition is skewed to low complexity; that stretch reads PTSSTQKRSKSQPRSSSQR. The segment covering 967 to 977 has biased composition (polar residues); that stretch reads QIPTGSSSKVQ. Composition is skewed to basic and acidic residues over residues 1030 to 1040 and 1048 to 1060; these read KSRDASPEKTP and SVER…DERN. The segment covering 1290–1301 has biased composition (low complexity); that stretch reads STSSGAVASGSS.

Belongs to the PAR3 family. In terms of assembly, required, together with pkc-3, for the localization of par-6; par-6 is involved in localizing/maintaining par-3 at the cell periphery. Interacts with par-6 and pkc-3 for localization at the periphery of anterior cortex of the embryo. Asymmetrically distributed at the periphery of the zygote and in dividing blastomeres of the germline lineage. Coexpressed with par-6; patchy expression observed at the periphery after completion of meiosis I and in meiosis II. On completion of metaphase II, expression is restricted to the anterior 85% of embryo length; this decreases to 55% in embryos between prophase and telophase of the first mitosis. During the first cleavage, expression is detected in the advancing furrow. Transiently coexpressed and colocalized asymmetrically with par-6 and pkc-3, in the developing somatic gonad, including the spermathecal precursor cells of L4 larvae.

The protein localises to the cytoplasm. Functionally, in cooperation with pkc-3, required for establishing cell polarity and regulating spindle orientation in the early embryo. Localization is crucial for recruiting par-6 and pkc-3 to the peripheral apical cortex and restricting par-2 to basolateral surfaces. Necessary for apicobasal and anterior-posterior asymmetries associated with cell adhesion and gastrulation during the first few cycles of embryogenesis, and also for epithelial cell polarity in the distal spermatheca. Regulates the asymmetric localization of csnk-1, ppk-1 and gpr-1/2 during the first embryonic division. This Caenorhabditis elegans protein is Partitioning defective protein 3.